The sequence spans 139 residues: DNA-directed RNA polymerase II subunit Rpb4 (139 aa).

Belongs to the eukaryotic RPB4 RNA polymerase subunit family. RNA polymerase II consists of 12 different subunits.

It localises to the nucleus. Its subcellular location is the chromosome. Functionally, DNA-dependent RNA polymerase catalyzes the transcription of DNA into RNA using the four ribonucleoside triphosphates as substrates. Associates with POLR2G. The sequence is that of DNA-directed RNA polymerase II subunit Rpb4 from Drosophila melanogaster (Fruit fly).